A 325-amino-acid chain; its full sequence is 5-dehydro-2-deoxygluconokinase (325 aa).

The protein belongs to the carbohydrate kinase PfkB family.

The enzyme catalyses 5-dehydro-2-deoxy-D-gluconate + ATP = 6-phospho-5-dehydro-2-deoxy-D-gluconate + ADP + H(+). Its pathway is polyol metabolism; myo-inositol degradation into acetyl-CoA; acetyl-CoA from myo-inositol: step 5/7. Its function is as follows. Catalyzes the phosphorylation of 5-dehydro-2-deoxy-D-gluconate (2-deoxy-5-keto-D-gluconate or DKG) to 6-phospho-5-dehydro-2-deoxy-D-gluconate (DKGP). The sequence is that of 5-dehydro-2-deoxygluconokinase from Listeria monocytogenes serotype 4a (strain HCC23).